The following is a 98-amino-acid chain: NADH-ubiquinone oxidoreductase chain 4L (98 aa).

3 helical membrane passes run 1 to 21, 29 to 49, and 61 to 81; these read MSLT…GLLM, SLLC…VIIL, and IILL…LVMV.

It belongs to the complex I subunit 4L family. Core subunit of respiratory chain NADH dehydrogenase (Complex I) which is composed of 45 different subunits.

The protein localises to the mitochondrion inner membrane. The enzyme catalyses a ubiquinone + NADH + 5 H(+)(in) = a ubiquinol + NAD(+) + 4 H(+)(out). Functionally, core subunit of the mitochondrial membrane respiratory chain NADH dehydrogenase (Complex I) which catalyzes electron transfer from NADH through the respiratory chain, using ubiquinone as an electron acceptor. Part of the enzyme membrane arm which is embedded in the lipid bilayer and involved in proton translocation. The protein is NADH-ubiquinone oxidoreductase chain 4L (MT-ND4L) of Uroderma bilobatum (Tent-making bat).